The primary structure comprises 118 residues: DNA-binding protein MmarC5_1518 (118 aa).

The segment covering 1–12 (MNPEEIRQRRLQ) has biased composition (basic and acidic residues). Positions 1–35 (MNPEEIRQRRLQEMQAKAQEQGAEDPEAQRQAQEQ) are disordered.

The protein belongs to the PDCD5 family.

The polypeptide is DNA-binding protein MmarC5_1518 (Methanococcus maripaludis (strain C5 / ATCC BAA-1333)).